We begin with the raw amino-acid sequence, 107 residues long: Phosphoribosyl-ATP pyrophosphatase (107 aa).

It belongs to the PRA-PH family.

It localises to the cytoplasm. It carries out the reaction 1-(5-phospho-beta-D-ribosyl)-ATP + H2O = 1-(5-phospho-beta-D-ribosyl)-5'-AMP + diphosphate + H(+). It functions in the pathway amino-acid biosynthesis; L-histidine biosynthesis; L-histidine from 5-phospho-alpha-D-ribose 1-diphosphate: step 2/9. This chain is Phosphoribosyl-ATP pyrophosphatase, found in Zymomonas mobilis subsp. mobilis (strain ATCC 31821 / ZM4 / CP4).